Consider the following 519-residue polypeptide: cAMP-dependent protein kinase catalytic subunit (519 aa).

Residues 1 to 195 (MLPDTGILSP…SQTLQKAENA (195 aa)) are disordered. Polar residues-rich tracts occupy residues 10–25 (PFTT…SQTL), 116–159 (VTPS…TSPI), and 173–191 (TPVN…TLQK). One can recognise a Protein kinase domain in the interval 208–463 (FNFQRTLGTG…SRSVLEHPWF (256 aa)). ATP is bound by residues 214-222 (LGTGSFGRV) and K237. D331 (proton acceptor) is an active-site residue. The 56-residue stretch at 464 to 519 (AEVNWERLLSKQIEPPYVPPVRGGIGDASLFDKYPEETEEYGKDGPDQYGHFFTDF) folds into the AGC-kinase C-terminal domain.

This sequence belongs to the protein kinase superfamily. Ser/Thr protein kinase family.

The enzyme catalyses L-seryl-[protein] + ATP = O-phospho-L-seryl-[protein] + ADP + H(+). The catalysed reaction is L-threonyl-[protein] + ATP = O-phospho-L-threonyl-[protein] + ADP + H(+). Activated by cAMP. Functionally, functions downstream of adenylate cyclase to regulate trap-development for nematode capture. This chain is cAMP-dependent protein kinase catalytic subunit, found in Arthrobotrys oligospora (strain ATCC 24927 / CBS 115.81 / DSM 1491) (Nematode-trapping fungus).